Here is a 426-residue protein sequence, read N- to C-terminus: C2H2 type master regulator of conidiophore development brlA (426 aa).

Disordered stretches follow at residues 25–71 (CPSM…DRGT) and 281–302 (GVRL…KQSL). Residues 30 to 44 (SSFSPLESPTPTPTS) show a composition bias toward low complexity. A compositionally biased stretch (polar residues) spans 45-58 (IYSQGSLASPSWPE). A compositionally biased stretch (basic residues) spans 288 to 297 (PSRKMARKQP). C2H2-type zinc fingers lie at residues 316–340 (FKCK…MKSH) and 346–371 (HVCW…TKTH). The tract at residues 384–426 (LDETSPDYNPDYRGPLTADGRPMPGGTLDESMPSREISMEWDE) is disordered.

The protein resides in the nucleus. Functionally, brlA, abaA and wetA are pivotal regulators of conidiophore development and conidium maturation. They act individually and together to regulate their own expression and that of numerous other sporulation-specific genes. Binds promoters of target genes at brlA response elements (BREs) containing the conserved sequence 5'-(C/A)(A/G)AGGG(G/A)-3'. Positively regulates expression of the gliotoxin biosynthetic gene cluster in actively growing vegetative cells, and likely bridges morphological and chemical development during the life-cycle. Regulates (directly or indirectly) the ergot cluster genes. Positively regulates expression of the fumiquinazoline C biosynthetic gene cluster. Positively regulates expression of the melanin biosynthetic gene cluster. Mediates repression of ribosomal protein gene expression in response to nitrogen depletion. The sequence is that of C2H2 type master regulator of conidiophore development brlA from Aspergillus fumigatus (strain ATCC MYA-4609 / CBS 101355 / FGSC A1100 / Af293) (Neosartorya fumigata).